The primary structure comprises 202 residues: Matrix protein (202 aa).

The PPXY motif motif lies at 35-38; it reads PPES. The essential for glycoprotein binding stretch occupies residues 115 to 151; that stretch reads KIRRTLVFQWAESRGPLDGEELEYSQEITWDDDSEFI.

It belongs to the lyssavirus matrix protein family. Homomultimer. Interacts with nucleoprotein and with the cytoplasmic domain of glycoprotein.

The protein resides in the virion membrane. The protein localises to the host endomembrane system. Its function is as follows. Plays a major role in assembly and budding of virion. Completely covers the ribonucleoprotein coil and keep it in condensed bullet-shaped form. Inhibits viral transcription and stimulates replication. Plays a major role in early induction of TRAIL-mediated apoptosis in infected neurons. This Myotis mystacinus (Whiskered bat) protein is Matrix protein (M).